We begin with the raw amino-acid sequence, 342 residues long: Farnesyl pyrophosphate synthase 2 (342 aa).

Isopentenyl diphosphate-binding residues include Lys48, Arg51, and Gln86. Positions 93 and 97 each coordinate Mg(2+). Arg102 serves as a coordination point for dimethylallyl diphosphate. An isopentenyl diphosphate-binding site is contributed by Arg103. Residues Lys190, Thr191, Gln229, Lys246, and Lys255 each coordinate dimethylallyl diphosphate.

Belongs to the FPP/GGPP synthase family. The cofactor is Mg(2+).

The protein resides in the cytoplasm. The enzyme catalyses isopentenyl diphosphate + dimethylallyl diphosphate = (2E)-geranyl diphosphate + diphosphate. It catalyses the reaction isopentenyl diphosphate + (2E)-geranyl diphosphate = (2E,6E)-farnesyl diphosphate + diphosphate. It participates in isoprenoid biosynthesis; farnesyl diphosphate biosynthesis; farnesyl diphosphate from geranyl diphosphate and isopentenyl diphosphate: step 1/1. It functions in the pathway isoprenoid biosynthesis; geranyl diphosphate biosynthesis; geranyl diphosphate from dimethylallyl diphosphate and isopentenyl diphosphate: step 1/1. Its function is as follows. Catalyzes the sequential condensation of isopentenyl pyrophosphate with the allylic pyrophosphates, dimethylallyl pyrophosphate, and then with the resultant geranylpyrophosphate to the ultimate product farnesyl pyrophosphate. The sequence is that of Farnesyl pyrophosphate synthase 2 (FPS2) from Parthenium argentatum (Guayule rubber plant).